The primary structure comprises 506 residues: Histidine--tRNA ligase, mitochondrial (506 aa).

The transit peptide at 1-33 (MPQLGLLPGRAWTVLLGLLRPPPGALCIRAVRS) directs the protein to the mitochondrion. Ser-67 carries the phosphoserine modification. L-histidine contacts are provided by residues 131–133 (DLT), Arg-158, Gln-174, Asp-178, Arg-327, and 331–332 (YY). The residue at position 444 (Lys-444) is an N6-acetyllysine.

This sequence belongs to the class-II aminoacyl-tRNA synthetase family. In terms of assembly, homodimer.

Its subcellular location is the mitochondrion. It catalyses the reaction tRNA(His) + L-histidine + ATP = L-histidyl-tRNA(His) + AMP + diphosphate + H(+). Mitochondrial aminoacyl-tRNA synthetase that catalyzes the ATP-dependent ligation of histidine to the 3'-end of its cognate tRNA, via the formation of an aminoacyl-adenylate intermediate (His-AMP). The sequence is that of Histidine--tRNA ligase, mitochondrial (HARS2) from Bos taurus (Bovine).